We begin with the raw amino-acid sequence, 333 residues long: Adenosine deaminase (333 aa).

Zn(2+) contacts are provided by His12 and His14. Positions 14, 16, and 170 each coordinate substrate. His197 lines the Zn(2+) pocket. Residue Glu200 is the Proton donor of the active site. A Zn(2+)-binding site is contributed by Asp278. Residue Asp279 participates in substrate binding.

Belongs to the metallo-dependent hydrolases superfamily. Adenosine and AMP deaminases family. Adenosine deaminase subfamily. The cofactor is Zn(2+).

It catalyses the reaction adenosine + H2O + H(+) = inosine + NH4(+). The enzyme catalyses 2'-deoxyadenosine + H2O + H(+) = 2'-deoxyinosine + NH4(+). Functionally, catalyzes the hydrolytic deamination of adenosine and 2-deoxyadenosine. This is Adenosine deaminase from Aliivibrio fischeri (strain ATCC 700601 / ES114) (Vibrio fischeri).